We begin with the raw amino-acid sequence, 601 residues long: Sodium-dependent phosphate transport protein 2C (601 aa).

Residues 1-75 are Cytoplasmic-facing; it reads MPNSLAGDQV…HQVVSGFLKA (75 aa). Ser4 carries the post-translational modification Phosphoserine. A helical membrane pass occupies residues 76–96; the sequence is CGLLGSLYFFICSLDILSSAF. At 97 to 110 the chain is on the extracellular side; sequence QLLGSKMAGDIFKD. The helical transmembrane segment at 111 to 131 threads the bilayer; the sequence is NVVLSNPVAGLVIGVVVTVLV. The Cytoplasmic portion of the chain corresponds to 132-187; sequence QSSSTSSSIVVSMVASKSLTVQASVPIIMGVNVGTSITSTLVSMAQSGDRDEFQRA. Residues 188–208 traverse the membrane as a helical segment; it reads FGGSAVHGIFNWLTVLVLLPL. At 209–324 the chain is on the extracellular side; sequence ENATAALERL…FAGSELTDLA (116 aa). Asn210, Asn264, Asn267, and Asn299 each carry an N-linked (GlcNAc...) asparagine glycan. Cys275 and Cys311 are joined by a disulfide. Residues 325–345 traverse the membrane as a helical segment; that stretch reads VGFILLAGSLLVLCVCLVLIV. Over 346 to 369 the chain is Cytoplasmic; it reads KLLNSVLRGRIAQAVKTVINADFP. The helical transmembrane segment at 370-390 threads the bilayer; the sequence is FPFGWLSGYLAILVGAGLTFL. Residues 391–447 are Extracellular-facing; it reads LQSSSVFTAAIVPLMGVGVINLERAYPLFLGSNIGTTTTALLAALASPADTLLFAVQ. Residues 448–468 form a helical membrane-spanning segment; it reads VALIHFFFNLAGILLWYLVPV. The Cytoplasmic portion of the chain corresponds to 469–487; sequence LRLPIPLAKRFGDLTAQYR. A helical transmembrane segment spans residues 488–508; that stretch reads WVAIVYLLLTFLLLPLAAFGL. Topologically, residues 509–512 are extracellular; it reads SLAG. The helical transmembrane segment at 513 to 533 threads the bilayer; sequence GSVLAAVGGPLVGLVLLIILV. Residues 534–601 are Cytoplasmic-facing; the sequence is NVLQRHRPSW…NPQVIASQQL (68 aa).

Belongs to the SLC34A transporter family. In terms of tissue distribution, highly expressed in the kidney. Not found in any of the other tested tissues.

It is found in the apical cell membrane. It catalyses the reaction 2 Na(+)(out) + phosphate(out) = 2 Na(+)(in) + phosphate(in). Involved in actively transporting phosphate into cells via Na(+) cotransport in the renal brush border membrane. The cotransport has a Na(+):Pi stoichiometry of 2:1 and is electroneutral. The sequence is that of Sodium-dependent phosphate transport protein 2C (Slc34a3) from Rattus norvegicus (Rat).